The following is a 109-amino-acid chain: Urocortin-2 (109 aa).

The first 22 residues, methionine 1–isoleucine 22, serve as a signal peptide directing secretion. A propeptide spanning residues proline 23 to threonine 67 is cleaved from the precursor. Positions threonine 24 to lysine 60 are disordered. The segment covering proline 33 to threonine 50 has biased composition (low complexity). A compositionally biased stretch (polar residues) spans glycine 51–lysine 60. Valine 106 bears the Valine amide; partial mark.

This sequence belongs to the sauvagine/corticotropin-releasing factor/urotensin I family. Binds with high affinity to CRF receptors 2-alpha and 2-beta. In terms of processing, glycosylated.

The protein resides in the secreted. Its function is as follows. Suppresses food intake, delays gastric emptying and decreases heat-induced edema. Might represent an endogenous ligand for maintaining homeostasis after stress. This Rattus norvegicus (Rat) protein is Urocortin-2 (Ucn2).